The chain runs to 214 residues: Adenylate kinase (214 aa).

An ATP-binding site is contributed by 10–15 (GAGKGT). The tract at residues 30-59 (STGDMLRAAVKSGSELGKQAKDIMDAGKLV) is NMP. Residues Thr-31, Arg-36, 57–59 (KLV), 85–88 (GFPR), and Gln-92 each bind AMP. An LID region spans residues 122-159 (GRRVHAPSGRVYHVKFNPPKVEGKDDVTGEELTTRKDD). Residues Arg-123 and 132-133 (VY) each bind ATP. AMP contacts are provided by Arg-156 and Arg-167. Residue Lys-192 is modified to N6-acetyllysine. Lys-200 is an ATP binding site.

This sequence belongs to the adenylate kinase family. Monomer.

The protein resides in the cytoplasm. The enzyme catalyses AMP + ATP = 2 ADP. The protein operates within purine metabolism; AMP biosynthesis via salvage pathway; AMP from ADP: step 1/1. Functionally, catalyzes the reversible transfer of the terminal phosphate group between ATP and AMP. Plays an important role in cellular energy homeostasis and in adenine nucleotide metabolism. In Escherichia coli O8 (strain IAI1), this protein is Adenylate kinase.